A 96-amino-acid polypeptide reads, in one-letter code: C-C motif chemokine 1 (96 aa).

Residues 1 to 23 (MQIITTALVCLLLAGMWPEDVDS) form the signal peptide. Cystine bridges form between Cys-33–Cys-57, Cys-34–Cys-73, and Cys-49–Cys-91. N-linked (GlcNAc...) asparagine glycosylation is present at Asn-52.

This sequence belongs to the intercrine beta (chemokine CC) family. In terms of assembly, monomer.

The protein resides in the secreted. Its function is as follows. Cytokine that is chemotactic for monocytes but not for neutrophils. Binds to CCR8. In Homo sapiens (Human), this protein is C-C motif chemokine 1 (CCL1).